The chain runs to 279 residues: tRNA pseudouridine synthase A (279 aa).

The active-site Nucleophile is D54. Y112 is a substrate binding site.

The protein belongs to the tRNA pseudouridine synthase TruA family. Homodimer.

It catalyses the reaction uridine(38/39/40) in tRNA = pseudouridine(38/39/40) in tRNA. Formation of pseudouridine at positions 38, 39 and 40 in the anticodon stem and loop of transfer RNAs. The protein is tRNA pseudouridine synthase A of Cutibacterium acnes (strain DSM 16379 / KPA171202) (Propionibacterium acnes).